Here is a 427-residue protein sequence, read N- to C-terminus: Peptidyl-prolyl cis-trans isomerase sig-7 (427 aa).

In terms of domain architecture, PPIase cyclophilin-type spans 6-161 (ETTLGDLIID…KDIRISHTIV (156 aa)). Positions 195–227 (DEKEDEDEGKTAEEIAEELQQREMAEQAQILEM) form a coiled coil. The RRM domain maps to 241–319 (NVLFVCKLNP…RRIHVDFSQS (79 aa)). Residues 322–334 (QNYKYKPKSQQQE) are compositionally biased toward polar residues. Residues 322-427 (QNYKYKPKSQ…RSPDRRRDRR (106 aa)) form a disordered region. Residues 351–370 (SHQRSPSPRRRRSPSPKKDK) are compositionally biased toward basic residues. Residues 384–427 (SSDNHRDRDRSYRDNNRDRRDNHRDSDRDRRRHDRSPDRRRDRR) are compositionally biased toward basic and acidic residues.

The protein belongs to the cyclophilin-type PPIase family. PPIL4 subfamily. In terms of assembly, interacts with ama-1, the catalytic subunit of the RNA polymerase II (RNA pol II) complex. In terms of tissue distribution, ubiquitous.

It is found in the nucleus. The protein localises to the nucleoplasm. It localises to the chromosome. It catalyses the reaction [protein]-peptidylproline (omega=180) = [protein]-peptidylproline (omega=0). In terms of biological role, probable PPIase that accelerates the folding of proteins. It catalyzes the cis-trans isomerization of proline imidic peptide bonds in oligopeptides. Involved in RNA polymerase II (RNA pol II)-mediated transcription elongation, and in primary transcript splicing, including co-transcriptional trans-splicing, in association with the catalytic subunit of the RNA pol II complex ama-1. Also plays a role in the regulation of elongation-dependent phosphorylation of ama-1 to control transcription. Involved in the transcription of several genes during embryogenesis and in particular, of genes related to developmental processes such as gastrulation, and also regulates transcription in germ cells from embryogenesis to adulthood. The polypeptide is Peptidyl-prolyl cis-trans isomerase sig-7 (Caenorhabditis elegans).